The primary structure comprises 431 residues: Probable sodium/metabolite cotransporter BASS3, chloroplastic (431 aa).

Residues 1-70 (MTLIASLSLP…RRNSGLVPVV (70 aa)) constitute a chloroplast transit peptide. The next 9 membrane-spanning stretches (helical) occupy residues 110 to 130 (FWSA…LSYP), 145 to 165 (LGGI…ALAF), 169 to 189 (VPLS…GVLV), 198 to 218 (TFYA…SSYA), 238 to 258 (IASV…VVPV), 261 to 281 (VAMS…GLVL), 288 to 308 (VVTL…SLCI), 325 to 345 (LGLI…GYWF), and 387 to 407 (VPAA…ASFW).

This sequence belongs to the bile acid:sodium symporter (BASS) (TC 2.A.28) family.

Its subcellular location is the membrane. It is found in the plastid. The protein resides in the chloroplast envelope. Its function is as follows. May function as sodium-coupled metabolite transporter across the chloroplast envelope. The chain is Probable sodium/metabolite cotransporter BASS3, chloroplastic (BASS3) from Arabidopsis thaliana (Mouse-ear cress).